A 506-amino-acid polypeptide reads, in one-letter code: ATP synthase subunit alpha, chloroplastic (506 aa).

170 to 177 (GDRQTGKT) contacts ATP.

The protein belongs to the ATPase alpha/beta chains family. As to quaternary structure, F-type ATPases have 2 components, CF(1) - the catalytic core - and CF(0) - the membrane proton channel. CF(1) has five subunits: alpha(3), beta(3), gamma(1), delta(1), epsilon(1). CF(0) has four main subunits: a, b, b' and c.

The protein resides in the plastid. It is found in the chloroplast thylakoid membrane. The catalysed reaction is ATP + H2O + 4 H(+)(in) = ADP + phosphate + 5 H(+)(out). Its function is as follows. Produces ATP from ADP in the presence of a proton gradient across the membrane. The alpha chain is a regulatory subunit. The chain is ATP synthase subunit alpha, chloroplastic from Chlorokybus atmophyticus (Soil alga).